A 363-amino-acid polypeptide reads, in one-letter code: Pyrimidine monooxygenase RutA (363 aa).

Residues isoleucine 49–lysine 50, asparagine 115, glutamate 124, arginine 140–tyrosine 141, and serine 190 contribute to the FMN site.

The protein belongs to the NtaA/SnaA/DszA monooxygenase family. RutA subfamily.

The catalysed reaction is uracil + FMNH2 + NADH + O2 = (Z)-3-ureidoacrylate + FMN + NAD(+) + H2O + H(+). The enzyme catalyses thymine + FMNH2 + NADH + O2 = (Z)-2-methylureidoacrylate + FMN + NAD(+) + H2O + H(+). Its function is as follows. Catalyzes the pyrimidine ring opening between N-3 and C-4 by an unusual flavin hydroperoxide-catalyzed mechanism, adding oxygen atoms in the process to yield ureidoacrylate peracid, that immediately reacts with FMN forming ureidoacrylate and FMN-N(5)-oxide. The FMN-N(5)-oxide reacts spontaneously with NADH to produce FMN. Requires the flavin reductase RutF to regenerate FMN in vivo. This Escherichia coli O103:H2 (strain 12009 / EHEC) protein is Pyrimidine monooxygenase RutA.